The sequence spans 337 residues: Monoacylglycerol lipase ABHD6 (337 aa).

Residues methionine 1–methionine 8 lie on the Extracellular side of the membrane. A helical; Signal-anchor for type II membrane protein membrane pass occupies residues phenylalanine 9–leucine 29. Residues tryptophan 30–asparagine 337 lie on the Cytoplasmic side of the membrane. The active-site Nucleophile is the serine 148. Active-site charge relay system residues include aspartate 278 and histidine 306.

It belongs to the AB hydrolase superfamily.

It is found in the late endosome membrane. Its subcellular location is the lysosome membrane. The protein resides in the mitochondrion membrane. It carries out the reaction Hydrolyzes glycerol monoesters of long-chain fatty acids.. It catalyses the reaction 1-octanoylglycerol + H2O = octanoate + glycerol + H(+). The enzyme catalyses 1-decanoylglycerol + H2O = decanoate + glycerol + H(+). The catalysed reaction is 1-dodecanoylglycerol + H2O = dodecanoate + glycerol + H(+). It carries out the reaction 1-tetradecanoylglycerol + H2O = tetradecanoate + glycerol + H(+). It catalyses the reaction 2-hexadecanoylglycerol + H2O = glycerol + hexadecanoate + H(+). The enzyme catalyses 2-(9Z-octadecenoyl)-glycerol + H2O = glycerol + (9Z)-octadecenoate + H(+). The catalysed reaction is 1-(9Z-octadecenoyl)-glycerol + H2O = glycerol + (9Z)-octadecenoate + H(+). It carries out the reaction 2-(9Z,12Z-octadecadienoyl)-glycerol + H2O = (9Z,12Z)-octadecadienoate + glycerol + H(+). It catalyses the reaction 2-(5Z,8Z,11Z,14Z-eicosatetraenoyl)-glycerol + H2O = glycerol + (5Z,8Z,11Z,14Z)-eicosatetraenoate + H(+). The enzyme catalyses 1-(5Z,8Z,11Z,14Z-eicosatetraenoyl)-glycerol + H2O = glycerol + (5Z,8Z,11Z,14Z)-eicosatetraenoate + H(+). The catalysed reaction is 1-(9Z,12Z-octadecadienoyl)-glycerol + H2O = (9Z,12Z)-octadecadienoate + glycerol + H(+). It carries out the reaction 3-(9Z-octadecenoyl)-sn-glycero-1-phospho-(3'-(9Z-octadecenoyl)-1'-sn-glycerol) + H2O = 3-(9Z-octadecenoyl)-sn-glycero-1-phospho-(1'-sn-glycerol) + (9Z)-octadecenoate + H(+). It catalyses the reaction (S,S)-2-(9Z-octadecenoyl)-sn-glycero-1-phospho-(2'-(9Z-octadecenoyl)-1'-sn-glycerol) + H2O = (S,S)-2-(9Z-octadecenoyl)-sn-glycero-1-phospho-(1'-sn-glycerol) + (9Z)-octadecenoate + H(+). The enzyme catalyses (R,R)-2-(9Z-octadecenoyl)-sn-glycero-3-phospho-(2'-(9Z-octadecenoyl)-3'-sn-glycerol) + H2O = (R,R)-2-(9Z-octadecenoyl)-sn-glycero-3-phospho-(3'-sn-glycerol) + (9Z)-octadecenoate + H(+). In terms of biological role, lipase that preferentially hydrolysis medium-chain saturated monoacylglycerols including 2-arachidonoylglycerol. Through 2-arachidonoylglycerol degradation may regulate endocannabinoid signaling pathways. Also has a lysophosphatidyl lipase activity with a preference for lysophosphatidylglycerol among other lysophospholipids. Also able to degrade bis(monoacylglycero)phosphate (BMP) and constitutes the major enzyme for BMP catabolism. BMP, also known as lysobisphosphatidic acid, is enriched in late endosomes and lysosomes and plays a key role in the formation of intraluminal vesicles and in lipid sorting. In Rattus norvegicus (Rat), this protein is Monoacylglycerol lipase ABHD6.